Here is a 226-residue protein sequence, read N- to C-terminus: MSNRTFQRGDPIGHAFADPALLAQALRHRSAGTPHNERLEFLGDGIVNLLIAEALYHRWPKADEGALTRARAELVREGALAVIGRTLNLGERLTLGPGELKSGGHRRDSILADAVEAIVAAIYLDCGFERCRAVVLPWFEASLAALPVGKAEKDPKTRLQEWLQARQLPLPTYALISESGDEHAKQFHVACILEQPVARAEGQGTSRRLAEQQAATLVIAQLDSNT.

One can recognise an RNase III domain in the interval 5-127 (TFQRGDPIGH…IVAAIYLDCG (123 aa)). Glu40 lines the Mg(2+) pocket. Asp44 is an active-site residue. Mg(2+)-binding residues include Asp113 and Glu116. Glu116 is an active-site residue. The DRBM domain occupies 154 to 224 (DPKTRLQEWL…ATLVIAQLDS (71 aa)).

This sequence belongs to the ribonuclease III family. In terms of assembly, homodimer. Mg(2+) serves as cofactor.

It localises to the cytoplasm. It carries out the reaction Endonucleolytic cleavage to 5'-phosphomonoester.. Functionally, digests double-stranded RNA. Involved in the processing of primary rRNA transcript to yield the immediate precursors to the large and small rRNAs (23S and 16S). Processes some mRNAs, and tRNAs when they are encoded in the rRNA operon. Processes pre-crRNA and tracrRNA of type II CRISPR loci if present in the organism. The polypeptide is Ribonuclease 3 (Xanthomonas axonopodis pv. citri (strain 306)).